The chain runs to 346 residues: Biotin synthase (346 aa).

In terms of domain architecture, Radical SAM core spans 38–256; that stretch reads RQVQVSTLLS…IAVARIMMPT (219 aa). Residues Cys-53, Cys-57, and Cys-60 each contribute to the [4Fe-4S] cluster site. The [2Fe-2S] cluster site is built by Cys-97, Cys-128, Cys-188, and Arg-260.

This sequence belongs to the radical SAM superfamily. Biotin synthase family. Homodimer. It depends on [4Fe-4S] cluster as a cofactor. Requires [2Fe-2S] cluster as cofactor.

The enzyme catalyses (4R,5S)-dethiobiotin + (sulfur carrier)-SH + 2 reduced [2Fe-2S]-[ferredoxin] + 2 S-adenosyl-L-methionine = (sulfur carrier)-H + biotin + 2 5'-deoxyadenosine + 2 L-methionine + 2 oxidized [2Fe-2S]-[ferredoxin]. It functions in the pathway cofactor biosynthesis; biotin biosynthesis; biotin from 7,8-diaminononanoate: step 2/2. Functionally, catalyzes the conversion of dethiobiotin (DTB) to biotin by the insertion of a sulfur atom into dethiobiotin via a radical-based mechanism. In Escherichia coli (strain SE11), this protein is Biotin synthase.